We begin with the raw amino-acid sequence, 177 residues long: Large ribosomal subunit protein uL10 (177 aa).

The protein belongs to the universal ribosomal protein uL10 family. As to quaternary structure, part of the ribosomal stalk of the 50S ribosomal subunit. The N-terminus interacts with L11 and the large rRNA to form the base of the stalk. The C-terminus forms an elongated spine to which L12 dimers bind in a sequential fashion forming a multimeric L10(L12)X complex.

Its function is as follows. Forms part of the ribosomal stalk, playing a central role in the interaction of the ribosome with GTP-bound translation factors. The sequence is that of Large ribosomal subunit protein uL10 from Variovorax paradoxus (strain S110).